A 362-amino-acid polypeptide reads, in one-letter code: G-protein coupled receptor 6 (362 aa).

Topologically, residues 1–74 (MNASAASLND…PGLLLPAVNP (74 aa)) are extracellular. N-linked (GlcNAc...) asparagine glycosylation is found at Asn2, Asn9, and Asn51. Residues 75–94 (WDVLLCVSGTVIAGENALVV) form a helical membrane-spanning segment. Residues 95–106 (ALIASTPALRTP) lie on the Cytoplasmic side of the membrane. The chain crosses the membrane as a helical span at residues 107–130 (MFVLVGSLATADLLAGCGLILHFV). The Extracellular segment spans residues 131-142 (FQYLVPSETVSL). A helical membrane pass occupies residues 143 to 164 (LTVGFLVASFAASVSSLLAITV). Topologically, residues 165–185 (DRYLSLYNALTYYSRRTLLGV) are cytoplasmic. The chain crosses the membrane as a helical span at residues 186–205 (HLLLAATWTVSLGLGLLPVL). The Extracellular portion of the chain corresponds to 206–230 (GWNCLAERAACSVVRPLARSHVALL). The helical transmembrane segment at 231 to 249 (SAAFFMVFGIMLHLYVRIC) threads the bilayer. The Cytoplasmic segment spans residues 250–277 (QVVWRHAHQIALQQHCLAPPHLAATRKG). The chain crosses the membrane as a helical span at residues 278 to 304 (VGTLAVVLGTFGASWLPFAIYCVVGSH). Topologically, residues 305 to 309 (EDPAV) are extracellular. Residues 310–331 (YTYATLLPATYNSMINPIIYAF) traverse the membrane as a helical segment. At 332–362 (RNQEIQRALWLLLCGCFQSKVPFRSRSPSEV) the chain is on the cytoplasmic side. The S-palmitoyl cysteine moiety is linked to residue Cys345. 3 positions are modified to phosphoserine: Ser356, Ser358, and Ser360.

It belongs to the G-protein coupled receptor 1 family.

The protein resides in the cell membrane. Functionally, orphan receptor with constitutive G(s) signaling activity that activate cyclic AMP. Promotes neurite outgrowth and blocks myelin inhibition in neurons. This is G-protein coupled receptor 6 (GPR6) from Homo sapiens (Human).